A 311-amino-acid chain; its full sequence is Porphobilinogen deaminase (311 aa).

Cys-242 carries the post-translational modification S-(dipyrrolylmethanemethyl)cysteine.

It belongs to the HMBS family. As to quaternary structure, monomer. It depends on dipyrromethane as a cofactor.

The catalysed reaction is 4 porphobilinogen + H2O = hydroxymethylbilane + 4 NH4(+). It participates in porphyrin-containing compound metabolism; protoporphyrin-IX biosynthesis; coproporphyrinogen-III from 5-aminolevulinate: step 2/4. Tetrapolymerization of the monopyrrole PBG into the hydroxymethylbilane pre-uroporphyrinogen in several discrete steps. The polypeptide is Porphobilinogen deaminase (Baumannia cicadellinicola subsp. Homalodisca coagulata).